The chain runs to 258 residues: Acyl-[acyl-carrier-protein]--UDP-N-acetylglucosamine O-acyltransferase (258 aa).

This sequence belongs to the transferase hexapeptide repeat family. LpxA subfamily. As to quaternary structure, homotrimer.

The protein localises to the cytoplasm. It catalyses the reaction a (3R)-hydroxyacyl-[ACP] + UDP-N-acetyl-alpha-D-glucosamine = a UDP-3-O-[(3R)-3-hydroxyacyl]-N-acetyl-alpha-D-glucosamine + holo-[ACP]. It participates in glycolipid biosynthesis; lipid IV(A) biosynthesis; lipid IV(A) from (3R)-3-hydroxytetradecanoyl-[acyl-carrier-protein] and UDP-N-acetyl-alpha-D-glucosamine: step 1/6. Functionally, involved in the biosynthesis of lipid A, a phosphorylated glycolipid that anchors the lipopolysaccharide to the outer membrane of the cell. This is Acyl-[acyl-carrier-protein]--UDP-N-acetylglucosamine O-acyltransferase from Thiobacillus denitrificans (strain ATCC 25259 / T1).